The following is a 502-amino-acid chain: Keratin, type II microfibrillar, component 5 (502 aa).

Serine 1 carries the blocked amino end (Ser) modification. The tract at residues 1–122 (SCRSYRISPG…PNAQCVKHQE (122 aa)) is head. Positions 122–433 (EKEQIKNLNS…RLLEGEEQRL (312 aa)) constitute an IF rod domain. The coil 1A stretch occupies residues 123–157 (KEQIKNLNSRFAAFIDKVRFLEQQNKLLETKWQFY). The linker 1 stretch occupies residues 158–167 (QNQRCCESNL). Positions 168 to 268 (EPLFNGYIET…YDEEIQILNA (101 aa)) are coil 1B. Lysine 228 participates in a covalent cross-link: Glycyl lysine isopeptide (Lys-Gly) (interchain with G-Cter in SUMO1). The linker 12 stretch occupies residues 269-285 (HISDTSVIVKMDNSRDL). The segment at 286 to 429 (NMDCVVAEIK…ATYRRLLEGE (144 aa)) is coil 2. Positions 430 to 502 (EQRLCEGVGS…CGSSRSVRFA (73 aa)) are tail.

This sequence belongs to the intermediate filament family. Hard keratin wool.

Functionally, wool microfibrillar keratin. The chain is Keratin, type II microfibrillar, component 5 from Ovis aries (Sheep).